The chain runs to 227 residues: MAQLRWLGHAATLLTFGNKNVIIDPMIKDNPLSPVKLDYFKNNLDIIIVTHDHYDHLGDTVELLRMNPKAKLFATYDLEAHLAETYKISEESIIPANVGGFVEVDGIKLALTKAVHSSTHSDPTGAIVSAEGITVYHAGDTGLFEDMKLIGEVFKPDYALLPIGGRFTMDPYQASISVELIKPKKGAIPIHYNTWDLIKVDVNDFVKLVKNKGYNPIVLQPGQTITL.

The protein belongs to the UPF0173 family.

This is UPF0173 metal-dependent hydrolase SSO0099 from Saccharolobus solfataricus (strain ATCC 35092 / DSM 1617 / JCM 11322 / P2) (Sulfolobus solfataricus).